The chain runs to 417 residues: D-amino acid dehydrogenase (417 aa).

Val-3–Trp-17 contributes to the FAD binding site.

This sequence belongs to the DadA oxidoreductase family. FAD serves as cofactor.

The catalysed reaction is a D-alpha-amino acid + A + H2O = a 2-oxocarboxylate + AH2 + NH4(+). It functions in the pathway amino-acid degradation; D-alanine degradation; NH(3) and pyruvate from D-alanine: step 1/1. Its function is as follows. Oxidative deamination of D-amino acids. The protein is D-amino acid dehydrogenase of Vibrio atlanticus (strain LGP32) (Vibrio splendidus (strain Mel32)).